A 183-amino-acid chain; its full sequence is MKGGKRVQPARPNRINKEIRATEVRLTGVDGEQIGIVSLNEALEKAEEAGVDLVEISPNAEPPVCRIMDYGKFLYEKSKSTKEQKKKQKVIQVKEIKFRPGTDDGDYQVKLRNLIRFLEDGDKAKITLRFRGREMAHQQIGMEVLNRVKKDLTEDSDLAVVESFPTRIEGRQMIMVLAPKKRQ.

It belongs to the IF-3 family. Monomer.

Its subcellular location is the cytoplasm. IF-3 binds to the 30S ribosomal subunit and shifts the equilibrium between 70S ribosomes and their 50S and 30S subunits in favor of the free subunits, thus enhancing the availability of 30S subunits on which protein synthesis initiation begins. The chain is Translation initiation factor IF-3 from Yersinia enterocolitica serotype O:8 / biotype 1B (strain NCTC 13174 / 8081).